The primary structure comprises 106 residues: Small membrane A-kinase anchor protein (106 aa).

Gly-2 carries N-myristoyl glycine lipidation. Cys-3 is lipidated: S-palmitoyl cysteine. Ser-40 carries the phosphoserine modification. The tract at residues 62 to 85 (ALILEFADRLASEIVEDALQQWAC) is PKA-RI-binding. Ser-98 is modified (phosphoserine).

It belongs to the small membrane AKAP family. As to quaternary structure, interacts with PKA type I regulatory subunits PRKAR1A and PRKAR1B. Also binds to type II regulatory subunits, but at a tenfold lower affinity. Post-translationally, may be palmitoylated at Cys-3. As to expression, widely expressed, with very low levels in spleen and liver.

It localises to the cell membrane. Binds to type I regulatory subunits of protein kinase A (PKA-RI) and may anchor/target them to the plasma membrane. The polypeptide is Small membrane A-kinase anchor protein (Mus musculus (Mouse)).